The sequence spans 723 residues: Zinc finger CCCH domain-containing protein 11A (723 aa).

3 consecutive C3H1-type zinc fingers follow at residues 2–29 (SKQGDDCYFYFYSTCNKGDNCPFRHCEA), 31–57 (LGNETICTLWKEGRCFRNVCRFRHMEI), and 60–87 (KRSEIPCFWENQPGGCQKSNCAFHHTKG). Disordered stretches follow at residues 142 to 208 (ENSE…KQDD), 223 to 256 (KKQKEKTKKQSEGPSGVPAHPLQSRTVPVPEKEN), 404 to 428 (KRAEGERKKQRILPPSVPGKVKLEE), 450 to 526 (EKAL…VKSL), and 565 to 681 (VKPS…APLS). Residues 160 to 175 (ADDDEDDDDQLSEEGE) are compositionally biased toward acidic residues. The stretch at 376 to 411 (KTFSEALAERKQRRLEEEKQKLEEFLTEKRAEGERK) forms a coiled coil. The span at 511-522 (PSNQSAPNSKAQ) shows a compositional bias: polar residues. Residues 609–620 (KKAALTAAPALP) are compositionally biased toward low complexity. Over residues 637 to 649 (LELQLGSQADSVE) the composition is skewed to polar residues. Low complexity predominate over residues 650–672 (QSGDSSSASASSQSVAKAQQLSS).

The protein localises to the nucleus speckle. Its function is as follows. Through its association with TREX complex components, may participate in the export and post-transcriptional coordination of selected mRNA transcripts. Binds RNA. The sequence is that of Zinc finger CCCH domain-containing protein 11A (ZC3H11A) from Gallus gallus (Chicken).